The primary structure comprises 307 residues: Aspartate carbamoyltransferase catalytic subunit (307 aa).

Residues Arg54 and Thr55 each contribute to the carbamoyl phosphate site. Lys83 serves as a coordination point for L-aspartate. The carbamoyl phosphate site is built by Arg104, His132, and Gln135. Arg165 and Arg228 together coordinate L-aspartate. The carbamoyl phosphate site is built by Leu267 and Pro268.

It belongs to the aspartate/ornithine carbamoyltransferase superfamily. ATCase family. In terms of assembly, heterododecamer (2C3:3R2) of six catalytic PyrB chains organized as two trimers (C3), and six regulatory PyrI chains organized as three dimers (R2).

It catalyses the reaction carbamoyl phosphate + L-aspartate = N-carbamoyl-L-aspartate + phosphate + H(+). Its pathway is pyrimidine metabolism; UMP biosynthesis via de novo pathway; (S)-dihydroorotate from bicarbonate: step 2/3. Its function is as follows. Catalyzes the condensation of carbamoyl phosphate and aspartate to form carbamoyl aspartate and inorganic phosphate, the committed step in the de novo pyrimidine nucleotide biosynthesis pathway. The sequence is that of Aspartate carbamoyltransferase catalytic subunit from Clostridium botulinum (strain ATCC 19397 / Type A).